The chain runs to 221 residues: Immunoregulatory peptides (221 aa).

A signal peptide spans 1–19 (MNYLCLVVTLVAVAGAISG). A propeptide spanning residues 20–45 (EKFSDDNTGYQSTPSLRIRTTPGRRR) is cleaved from the precursor. Residues 21-155 (KFSDDNTGYQ…PRTIGPPYTR (135 aa)) are disordered. Over residues 25–34 (DNTGYQSTPS) the composition is skewed to polar residues. Low complexity predominate over residues 48–69 (PRTIGPPYTRRTLRTTTDYSTT). Composition is skewed to polar residues over residues 70 to 85 (VENGNLTTPAANSTEK) and 123 to 133 (NGTTPAANSTE). Residues 191–221 (EISWTFGPLYTWRTTKGYGTTLETTNATSTS) constitute a propeptide that is removed on maturation.

As to expression, salivary glands.

The protein resides in the secreted. Functionally, suppress host inflammatory response. Exerts significant anti-inflammatory functions, either by directly inhibiting host secretion of inflammatory factors such as tumor necrosis factor-alpha (TNF), monocyte chemotactic protein-1 (CCL2), and interferon-gamma (IFNG) or by indirectly increasing the secretion of immunosuppressant cytokine of interleukin-10 (IL10). Also potently scavenges free radical in vitro in a rapid manner. All tested concentrations of this peptide have little effect on the cell viability. In vivo, inhibits hind paw adjuvant-induced inflammation in mouse in a dose-dependent manner. In terms of biological role, suppress host inflammatory response. Exerts significant anti-inflammatory functions, either by directly inhibiting host secretion of inflammatory factors such as tumor necrosis factor-alpha (TNF), monocyte chemotactic protein-1 (CCL2), and interferon-gamma (IFNG) or by indirectly increasing the secretion of immunosuppressant cytokine of interleukin-10 (IL10). Also potently scavenges free radical in vitro in a rapid manner. Low concentrations of this peptide have little effect on the cell viability, whereas high concentrations increase the cell viability by 10-20%. In vivo, inhibits hind paw adjuvant-induced inflammation in mouse in a dose-dependent manner. Its function is as follows. Not studied but probably similar to Hyalomin-B1. The polypeptide is Immunoregulatory peptides (Hyalomma asiaticum asiaticum (Tick)).